The sequence spans 355 residues: 3-dehydroquinate synthase (355 aa).

NAD(+) is bound by residues 71 to 76 (EGEERK), 105 to 109 (GVVGD), 129 to 130 (TS), Lys-142, and Lys-151. Glu-184, His-246, and His-263 together coordinate Zn(2+).

This sequence belongs to the sugar phosphate cyclases superfamily. Dehydroquinate synthase family. Requires NAD(+) as cofactor. Co(2+) serves as cofactor. The cofactor is Zn(2+).

It localises to the cytoplasm. It carries out the reaction 7-phospho-2-dehydro-3-deoxy-D-arabino-heptonate = 3-dehydroquinate + phosphate. It participates in metabolic intermediate biosynthesis; chorismate biosynthesis; chorismate from D-erythrose 4-phosphate and phosphoenolpyruvate: step 2/7. Functionally, catalyzes the conversion of 3-deoxy-D-arabino-heptulosonate 7-phosphate (DAHP) to dehydroquinate (DHQ). The polypeptide is 3-dehydroquinate synthase (Streptococcus pneumoniae (strain ATCC BAA-255 / R6)).